The sequence spans 423 residues: Serine--tRNA ligase (423 aa).

A compositionally biased stretch (basic and acidic residues) spans 1-12 (MIDLKALRENPD). Positions 1–26 (MIDLKALRENPDVGRASQRSRGEDPE) are disordered. 230-232 (TSE) serves as a coordination point for L-serine. ATP contacts are provided by residues 261 to 263 (RRE) and Val277. Position 284 (Glu284) interacts with L-serine. 348–351 (ELTS) provides a ligand contact to ATP. L-serine is bound at residue Thr383.

This sequence belongs to the class-II aminoacyl-tRNA synthetase family. Type-1 seryl-tRNA synthetase subfamily. Homodimer. The tRNA molecule binds across the dimer.

It localises to the cytoplasm. It catalyses the reaction tRNA(Ser) + L-serine + ATP = L-seryl-tRNA(Ser) + AMP + diphosphate + H(+). The catalysed reaction is tRNA(Sec) + L-serine + ATP = L-seryl-tRNA(Sec) + AMP + diphosphate + H(+). The protein operates within aminoacyl-tRNA biosynthesis; selenocysteinyl-tRNA(Sec) biosynthesis; L-seryl-tRNA(Sec) from L-serine and tRNA(Sec): step 1/1. Functionally, catalyzes the attachment of serine to tRNA(Ser). Is also able to aminoacylate tRNA(Sec) with serine, to form the misacylated tRNA L-seryl-tRNA(Sec), which will be further converted into selenocysteinyl-tRNA(Sec). The sequence is that of Serine--tRNA ligase from Beutenbergia cavernae (strain ATCC BAA-8 / DSM 12333 / CCUG 43141 / JCM 11478 / NBRC 16432 / NCIMB 13614 / HKI 0122).